The sequence spans 128 residues: Aspartate 1-decarboxylase (128 aa).

The active-site Schiff-base intermediate with substrate; via pyruvic acid is the S25. The residue at position 25 (S25) is a Pyruvic acid (Ser). T57 lines the substrate pocket. Y58 functions as the Proton donor in the catalytic mechanism. Residue 73–75 (GSA) coordinates substrate.

This sequence belongs to the PanD family. In terms of assembly, heterooctamer of four alpha and four beta subunits. Pyruvate is required as a cofactor. Is synthesized initially as an inactive proenzyme, which is activated by self-cleavage at a specific serine bond to produce a beta-subunit with a hydroxyl group at its C-terminus and an alpha-subunit with a pyruvoyl group at its N-terminus.

It localises to the cytoplasm. It carries out the reaction L-aspartate + H(+) = beta-alanine + CO2. It participates in cofactor biosynthesis; (R)-pantothenate biosynthesis; beta-alanine from L-aspartate: step 1/1. Catalyzes the pyruvoyl-dependent decarboxylation of aspartate to produce beta-alanine. This chain is Aspartate 1-decarboxylase, found in Burkholderia thailandensis (strain ATCC 700388 / DSM 13276 / CCUG 48851 / CIP 106301 / E264).